Consider the following 326-residue polypeptide: MAFTPFPPRQPTASARLPLTLMTLDDWALATITGADSEKYMQGQVTADVSQMAEDQHLLAAHCDAKGKMWSNLRLFRDGDGFAWIERRSVREPQLTELKKYAVFSKVTIAPDDERVLLGVAGFQARAALANLFSELPSKEKQVVKEGATTLLWFEHPAERFLIVTDEATANMLTDKLRGEAELNNSQQWLALNIEAGFPVIDAANSGQFIPQATNLQALGGISFKKGCYTGQEMVARAKFRGANKRALWLLAGSASRLPEAGEDLELKMGENWRRTGTVLAAVKLEDGQVVVQVVMNNDMEPDSIFRVRDDANTLHIEPLPYSLEE.

The folate site is built by W27 and W189.

It belongs to the tRNA-modifying YgfZ family.

It localises to the cytoplasm. Functionally, folate-binding protein involved in regulating the level of ATP-DnaA and in the modification of some tRNAs. It is probably a key factor in regulatory networks that act via tRNA modification, such as initiation of chromosomal replication. This is tRNA-modifying protein YgfZ from Escherichia coli O139:H28 (strain E24377A / ETEC).